The primary structure comprises 319 residues: R-phycoerythrin gamma chain, chloroplastic (319 aa).

The N-terminal 71 residues, Met1–Arg71, are a transit peptide targeting the chloroplast. Residues Cys96 and Cys135 each coordinate phycourobilin. (2R,3E)-phycoerythrobilin is bound at residue Cys212. Residue Cys299 coordinates phycourobilin.

Heteromer of 4 alpha, 4 beta and one gamma chains. Contains four covalently linked bilin chromophores.

It localises to the plastid. The protein resides in the chloroplast thylakoid membrane. The chain is R-phycoerythrin gamma chain, chloroplastic from Corallina officinalis (Coral seaweed).